The sequence spans 980 residues: GPI inositol-deacylase (980 aa).

Topologically, residues 1-7 (MFMFRNC) are cytoplasmic. Residues 8–28 (AVLLVIGSICCFIYGLFRLHV) form a helical membrane-spanning segment. Topologically, residues 29–628 (EVEPNACRMT…EYSYSSALSR (600 aa)) are lumenal. Serine 170 is a catalytic residue. N-linked (GlcNAc...) asparagine glycans are attached at residues asparagine 427, asparagine 517, and asparagine 596. The helical transmembrane segment at 629–649 (LVLEFYGWLPAHLVCVLLIVL) threads the bilayer. Residues 650–709 (RKQVETFYDVGTFRSLRPYVGYLQYTSLYIVTACRLLKKLIISSRVFPEPEPLDYSINVS) lie on the Cytoplasmic side of the membrane. A helical membrane pass occupies residues 710–730 (IVIHCAAIALSLLATLGTWLA). At 731-774 (LTLYGNAFYRLALRITRLSQATSNVMISIMTHLPITYGILTIAT) the chain is on the lumenal side. The chain crosses the membrane as a helical span at residues 775-795 (AMGTCSGVGLLLAFVFYFLML). The Cytoplasmic segment spans residues 796–867 (SNAYKDYLED…CVGLQNFSFH (72 aa)). Residues 821–853 (AVTEQEDATEEQNEEQNALKQNDEQKQQQQEEE) form a disordered region. The segment covering 824-834 (EQEDATEEQNE) has biased composition (acidic residues). Residues 868 to 888 (VTLLLMLFVQLLLNAPSSLAW) traverse the membrane as a helical segment. Residues 889–895 (LRSRRHG) lie on the Lumenal side of the membrane. A helical membrane pass occupies residues 896-916 (INLPDPSLYPSIVVLASLSLL). Over 917 to 929 (LQLRAPQKCQGYW) the chain is Cytoplasmic. Residues 930 to 950 (MLSIAFYILAGVVLLYCQAAI) form a helical membrane-spanning segment. Residues 951-954 (YRLT) lie on the Lumenal side of the membrane. A helical membrane pass occupies residues 955–975 (YVIAGAFALLSAHQSLWILWG). Topologically, residues 976–980 (RVSRV) are cytoplasmic.

It belongs to the GPI inositol-deacylase family.

It is found in the endoplasmic reticulum membrane. Its function is as follows. Involved in inositol deacylation of GPI-anchored proteins. This Drosophila melanogaster (Fruit fly) protein is GPI inositol-deacylase.